The primary structure comprises 212 residues: ATP-dependent Clp protease proteolytic subunit (212 aa).

Serine 112 acts as the Nucleophile in catalysis. Histidine 137 is a catalytic residue.

The protein belongs to the peptidase S14 family. As to quaternary structure, fourteen ClpP subunits assemble into 2 heptameric rings which stack back to back to give a disk-like structure with a central cavity, resembling the structure of eukaryotic proteasomes.

The protein localises to the cytoplasm. The enzyme catalyses Hydrolysis of proteins to small peptides in the presence of ATP and magnesium. alpha-casein is the usual test substrate. In the absence of ATP, only oligopeptides shorter than five residues are hydrolyzed (such as succinyl-Leu-Tyr-|-NHMec, and Leu-Tyr-Leu-|-Tyr-Trp, in which cleavage of the -Tyr-|-Leu- and -Tyr-|-Trp bonds also occurs).. Cleaves peptides in various proteins in a process that requires ATP hydrolysis. Has a chymotrypsin-like activity. Plays a major role in the degradation of misfolded proteins. The sequence is that of ATP-dependent Clp protease proteolytic subunit from Thiobacillus denitrificans (strain ATCC 25259 / T1).